The chain runs to 402 residues: Tryptophan synthase beta chain (402 aa).

K92 carries the N6-(pyridoxal phosphate)lysine modification.

This sequence belongs to the TrpB family. Tetramer of two alpha and two beta chains. Pyridoxal 5'-phosphate is required as a cofactor.

The catalysed reaction is (1S,2R)-1-C-(indol-3-yl)glycerol 3-phosphate + L-serine = D-glyceraldehyde 3-phosphate + L-tryptophan + H2O. Its pathway is amino-acid biosynthesis; L-tryptophan biosynthesis; L-tryptophan from chorismate: step 5/5. Functionally, the beta subunit is responsible for the synthesis of L-tryptophan from indole and L-serine. The chain is Tryptophan synthase beta chain from Staphylococcus epidermidis (strain ATCC 35984 / DSM 28319 / BCRC 17069 / CCUG 31568 / BM 3577 / RP62A).